A 61-amino-acid chain; its full sequence is MSFLKKSLFLVLFLGLVSFSICEEEKRETEEEENEDEMDKESEEKRESPERPPGFTPFRVD.

A signal peptide spans 1–22 (MSFLKKSLFLVLFLGLVSFSIC). The propeptide occupies 23–50 (EEEKRETEEEENEDEMDKESEEKRESPE). The segment at 24 to 61 (EEKRETEEEENEDEMDKESEEKRESPERPPGFTPFRVD) is disordered. Over residues 30-41 (EEEENEDEMDKE) the composition is skewed to acidic residues. Pro-53 carries the post-translational modification 4-hydroxyproline; in form [Hyp3,Thr6]-bradykinyl-Val,Asp and [Hyp3,Thr6]-bradykinin.

It belongs to the frog skin active peptide (FSAP) family. Bradykinin-related peptide subfamily. In terms of tissue distribution, expressed by the skin glands.

Its subcellular location is the secreted. Induces relaxation of rat smooth muscle from tail artery (EC(50)=16.8 nM) and contraction of that from ileum (EC(50)=205 nM), urinary bladder (EC(50)=895 nM) and uterus (EC(50)=60.3 nM). Binds to both bradykinin receptor B1 (BDKRB1) and B2 (BDKRB2). Functionally, [Hyp3,Thr6]-bradykinin: Induces relaxation of rat smooth muscle from tail artery (EC(50)=56.7 nM) and contraction of that from ileum (EC(50)=588 nM), urinary bladder (EC(50)=4.6 uM) and uterus (EC(50)=3.9 nM). Binds to both bradykinin receptor B1 (BDKRB1) and B2 (BDKRB2). In arterial smooth muscle, the effect via BDKRB1 is stronger, in uterus, ileum and urinary bladder that via BDKRB2. In terms of biological role, induces relaxation of rat smooth muscle from tail artery (EC(50)=10.8 nM) and contraction of that from ileum (EC(50)=645 nM), urinary bladder (EC(50)=1.1 uM) and uterus (EC(50)=1.2 uM). Binds to both bradykinin receptor B1 (BDKRB1) and B2 (BDKRB2). Apart from uterus smooth muscle, the effect via B2 is stronger. Its function is as follows. [Hyp3,Thr6]-bradykinyl-Val,Asp: Induces relaxation of rat smooth muscle from tail artery (EC(50)=3.5 nM) and contraction of that from ileum (EC(50)=223 nM), urinary bladder (EC(50)=1.5 uM) and uterus (EC(50)=356 nM). Binds to both bradykinin receptor B1 (BDKRB1) and B2 (BDKRB2); the effects via B2 a stronger. The sequence is that of [Thr6]-bradykinyl-Val,Asp from Agalychnis callidryas (Red-eyed tree frog).